The following is a 321-amino-acid chain: Glucokinase (321 aa).

8–13 (GDVGGT) contacts ATP.

Belongs to the bacterial glucokinase family.

Its subcellular location is the cytoplasm. It carries out the reaction D-glucose + ATP = D-glucose 6-phosphate + ADP + H(+). This Escherichia fergusonii (strain ATCC 35469 / DSM 13698 / CCUG 18766 / IAM 14443 / JCM 21226 / LMG 7866 / NBRC 102419 / NCTC 12128 / CDC 0568-73) protein is Glucokinase.